A 317-amino-acid polypeptide reads, in one-letter code: Aspartate carbamoyltransferase catalytic subunit (317 aa).

Carbamoyl phosphate contacts are provided by Arg-66 and Thr-67. Position 94 (Lys-94) interacts with L-aspartate. Arg-116, His-144, and Gln-147 together coordinate carbamoyl phosphate. Arg-177 and Arg-231 together coordinate L-aspartate. Gly-272 and Pro-273 together coordinate carbamoyl phosphate.

Belongs to the aspartate/ornithine carbamoyltransferase superfamily. ATCase family. In terms of assembly, heterododecamer (2C3:3R2) of six catalytic PyrB chains organized as two trimers (C3), and six regulatory PyrI chains organized as three dimers (R2).

The catalysed reaction is carbamoyl phosphate + L-aspartate = N-carbamoyl-L-aspartate + phosphate + H(+). It functions in the pathway pyrimidine metabolism; UMP biosynthesis via de novo pathway; (S)-dihydroorotate from bicarbonate: step 2/3. Catalyzes the condensation of carbamoyl phosphate and aspartate to form carbamoyl aspartate and inorganic phosphate, the committed step in the de novo pyrimidine nucleotide biosynthesis pathway. The sequence is that of Aspartate carbamoyltransferase catalytic subunit from Nitrobacter hamburgensis (strain DSM 10229 / NCIMB 13809 / X14).